The primary structure comprises 412 residues: Potassium channel, subfamily K, member 13 (412 aa).

Topologically, residues 1 to 21 (MACRSGCCCNSIGSFNEDNAR) are cytoplasmic. The chain crosses the membrane as a helical span at residues 22–42 (FLMLALLIIIYLLCGAAVFSA). The pore-forming intramembrane region spans 97–117 (WDFAGAFYFVGTVVSTIGFGM). Residues Thr112, Ile113, and Gly114 each coordinate K(+). The segment at 112–117 (TIGFGM) is selectivity filter 1. Residues 127 to 147 (IFLIFYGLIGCAATILFFNLF) form a helical membrane-spanning segment. Over 148-198 (LERVITVIAFVLKFCHERRESRKAGPTQNCRRPSTDNRDRRTDSLAGWKPS) the chain is Cytoplasmic. Residues 199–219 (VYCVMLILGVAAILVSCCASA) traverse the membrane as a helical segment. Residues 229–249 (YLDALYFCFVAFSTIGFGDMV) constitute an intramembrane region (pore-forming). K(+) contacts are provided by Thr242, Ile243, Gly244, and Phe245. Residues 242-247 (TIGFGD) are selectivity filter 2. A helical membrane pass occupies residues 268–288 (LFILTGVCCIYSLFNVISIVI). At 289–412 (KQVLNWLLRR…NRLAETSVDR (124 aa)) the chain is on the cytoplasmic side. Residues 374-386 (MANGHPRQSGSSS) show a composition bias toward polar residues. The tract at residues 374-395 (MANGHPRQSGSSSRHNEFSGGV) is disordered.

It belongs to the two pore domain potassium channel (TC 1.A.1.8) family. As to quaternary structure, homodimer. Heterodimer. Brain and heart.

The protein resides in the cell membrane. The catalysed reaction is K(+)(in) = K(+)(out). Its activity is regulated as follows. The channel conductance is activated by arachidonic acid and inhibited by Ba(2+) ions, volatile anesthetics such as halothane and antiarrhythmic drug mexiletine. Insensitive to extracellular pH change. Its function is as follows. K(+) channel that conducts outward rectifying tonic currents potentiated by purinergic signals. Homo- and heterodimerizes to form functional channels with distinct regulatory and gating properties. Contributes most of K(+) currents at the plasma membrane of resting microglia. Maintains a depolarized membrane potential required for proper ramified microglia morphology and phagocytosis, selectively mediating microglial pruning of presynaptic compartments at hippocampal excitatory synapses. Upon local release of ATP caused by neuronal injury or infection, it is potentiated by purinergic signaling and contributes to ATP-triggered K(+) efflux underlying microglial NLRP3 inflammasome assembly and IL1B release. In Danio rerio (Zebrafish), this protein is Potassium channel, subfamily K, member 13.